The primary structure comprises 387 residues: MVMILIKLEIDRRAYNSIKNFSRLVYTKAIKNRGDLPKKEEIVTLTYNGKFVAKALYNPKSVILKILTTEDEEIDYDFFYKRIFNAKIYRENILNYKNTYRWIYAEGDELPTIIFDKYNELGAMQLMSKLIEKEYLKDIVDILFELSDLETIYVKRGKKGERIRDKIFGDKNKFETVIKEGDAKFKVNVRGHKTGFFLDQRENRLYLEKFIKEGDRVLDICCYTGGFSVHAAIRGAEVVGVDLSKKALKLAEENIELNNIPKDRYEFIEGNAFEVMKEMIEDKEKFDVVILDPPAFTQTEDDIKNALRAYASLNYLGIKLAKRIFVTCSCSHHVDKEMFKRTVISSAFRAKKELIMIDYKGQAPDHPISIGNKNLEYLKCIFFYVKN.

One can recognise a PUA domain in the interval 5–81 (LIKLEIDRRA…EEIDYDFFYK (77 aa)).

This sequence belongs to the methyltransferase superfamily. RlmI family.

The protein resides in the cytoplasm. This is Putative ribosomal RNA large subunit methyltransferase MJ1649 from Methanocaldococcus jannaschii (strain ATCC 43067 / DSM 2661 / JAL-1 / JCM 10045 / NBRC 100440) (Methanococcus jannaschii).